Consider the following 379-residue polypeptide: Chaperone protein DnaJ (379 aa).

The J domain maps to 5–70; that stretch reads DYYEVLGVSR…QKRAAYDQYG (66 aa). A CR-type zinc finger spans residues 134–212; the sequence is GVTKEIRIPT…CHGHGRVEKS (79 aa). 8 residues coordinate Zn(2+): Cys-147, Cys-150, Cys-164, Cys-167, Cys-186, Cys-189, Cys-200, and Cys-203. CXXCXGXG motif repeat units follow at residues 147-154, 164-171, 186-193, and 200-207; these read CDVCHGSG, CPTCHGAG, CPHCHGRG, and CNKCHGHG.

This sequence belongs to the DnaJ family. In terms of assembly, homodimer. The cofactor is Zn(2+).

Its subcellular location is the cytoplasm. Participates actively in the response to hyperosmotic and heat shock by preventing the aggregation of stress-denatured proteins and by disaggregating proteins, also in an autonomous, DnaK-independent fashion. Unfolded proteins bind initially to DnaJ; upon interaction with the DnaJ-bound protein, DnaK hydrolyzes its bound ATP, resulting in the formation of a stable complex. GrpE releases ADP from DnaK; ATP binding to DnaK triggers the release of the substrate protein, thus completing the reaction cycle. Several rounds of ATP-dependent interactions between DnaJ, DnaK and GrpE are required for fully efficient folding. Also involved, together with DnaK and GrpE, in the DNA replication of plasmids through activation of initiation proteins. The chain is Chaperone protein DnaJ from Yersinia pseudotuberculosis serotype O:1b (strain IP 31758).